Consider the following 470-residue polypeptide: Box C/D snoRNA protein 1 (470 aa).

The segment at 1 to 70 is disordered; sequence MEFAAENEGK…EEGSGQRPEE (70 aa). Ser-25 carries the phosphoserine modification. Residues 41 to 51 are compositionally biased toward gly residues; that stretch reads EFGGGEEGTGL. Residues Lys-79, Lys-108, Lys-118, Lys-138, Lys-143, Lys-153, Lys-162, Lys-173, Lys-183, and Lys-200 each participate in a glycyl lysine isopeptide (Lys-Gly) (interchain with G-Cter in SUMO2) cross-link. Zn(2+)-binding residues include Cys-220, Cys-223, Cys-232, Cys-235, Cys-240, Cys-244, His-248, and Cys-254. The segment at 220–254 adopts an HIT-type zinc-finger fold; the sequence is CETCGTEEAKYRCPRCMRYSCSLPCVKKHKAELTC. Lys-459 participates in a covalent cross-link: Glycyl lysine isopeptide (Lys-Gly) (interchain with G-Cter in SUMO2).

This sequence belongs to the BCD1 family. Interacts with FBL, SNU13, NOP58, NUFIP1, RUVBL1, RUVBL2 and TAF9. Interacts (via HIT-type zinc finger) with the RUVBL1/RUVBL2 complex in the presence of ADP.

Its function is as follows. Required for box C/D snoRNAs accumulation involved in snoRNA processing, snoRNA transport to the nucleolus and ribosome biogenesis. This is Box C/D snoRNA protein 1 (ZNHIT6) from Homo sapiens (Human).